Here is a 340-residue protein sequence, read N- to C-terminus: UDP-3-O-(3-hydroxymyristoyl)glucosamine N-acyltransferase (340 aa).

Histidine 239 (proton acceptor) is an active-site residue.

This sequence belongs to the transferase hexapeptide repeat family. LpxD subfamily. Homotrimer.

It catalyses the reaction a UDP-3-O-[(3R)-3-hydroxyacyl]-alpha-D-glucosamine + a (3R)-hydroxyacyl-[ACP] = a UDP-2-N,3-O-bis[(3R)-3-hydroxyacyl]-alpha-D-glucosamine + holo-[ACP] + H(+). It carries out the reaction UDP-3-O-[(3R)-3-hydroxytetradecanoyl]-alpha-D-glucosamine + (3R)-hydroxytetradecanoyl-[ACP] = UDP-2-N,3-O-bis[(3R)-3-hydroxytetradecanoyl]-alpha-D-glucosamine + holo-[ACP] + H(+). It participates in glycolipid biosynthesis; lipid IV(A) biosynthesis; lipid IV(A) from (3R)-3-hydroxytetradecanoyl-[acyl-carrier-protein] and UDP-N-acetyl-alpha-D-glucosamine: step 3/6. In terms of biological role, catalyzes the N-acylation of UDP-3-O-(hydroxytetradecanoyl)glucosamine using 3-hydroxytetradecanoyl-ACP as the acyl donor. Is involved in the biosynthesis of lipid A, a phosphorylated glycolipid that anchors the lipopolysaccharide to the outer membrane of the cell. This Sodalis glossinidius (strain morsitans) protein is UDP-3-O-(3-hydroxymyristoyl)glucosamine N-acyltransferase.